A 406-amino-acid chain; its full sequence is Lymphocyte transmembrane adapter 1 (406 aa).

The disordered stretch occupies residues 1 to 25; it reads MYTTPAPPEITRRSSEPSTQQGTLG. At 1–33 the chain is on the extracellular side; the sequence is MYTTPAPPEITRRSSEPSTQQGTLGSLEGEKGH. Residues 34 to 54 form a helical; Signal-anchor for type III membrane protein membrane-spanning segment; that stretch reads LLFPGFVVLVTIFLVVIVTCI. Residues 55–406 are Cytoplasmic-facing; sequence LWSRKKQKKR…LATETSGEEV (352 aa). A disordered region spans residues 109-131; that stretch reads ESLLSRASDSPEPEVPQASGSLQ. Y184 bears the Phosphotyrosine mark. The segment at 219–258 is disordered; the sequence is AEGGHAGCGKATDRTGVWAPGLQGSNSLSEGDDSSQSSND. Positions 242–258 are enriched in low complexity; it reads GSNSLSEGDDSSQSSND. Residues Y259, Y285, and Y352 each carry the phosphotyrosine modification. The segment at 358–406 is disordered; sequence PELEGKDWKQGPGTWHPSDERTPSDQAGKFCEAVYPAGSLATETSGEEV.

In terms of assembly, when phosphorylated, interacts with GRB2, PIK3R1 and GRAP2. Post-translationally, phosphorylated on tyrosines upon TCR or BCR activation; which leads to the recruitment of GRB2, PIK3R1 and GRAP2.

It localises to the cell membrane. In terms of biological role, negatively regulates TCR (T-cell antigen receptor)-mediated signaling in T-cells and BCR (B-cell antigen receptor)-mediated signaling in B-cells. The chain is Lymphocyte transmembrane adapter 1 (Lax1) from Rattus norvegicus (Rat).